Consider the following 927-residue polypeptide: Probable RNA-dependent RNA polymerase 4 (927 aa).

Positions 98–135 are disordered; that stretch reads GESPVQFPRTPGKKSCRASQAEVSLDREDPSPKFLRGD. Over residues 121 to 135 the composition is skewed to basic and acidic residues; it reads SLDREDPSPKFLRGD.

The protein belongs to the RdRP family.

The enzyme catalyses RNA(n) + a ribonucleoside 5'-triphosphate = RNA(n+1) + diphosphate. In terms of biological role, probably involved in the RNA silencing pathway and required for the generation of small interfering RNAs (siRNAs). The sequence is that of Probable RNA-dependent RNA polymerase 4 (RDR4) from Arabidopsis thaliana (Mouse-ear cress).